Here is a 100-residue protein sequence, read N- to C-terminus: NADH-quinone oxidoreductase subunit K (100 aa).

A run of 3 helical transmembrane segments spans residues 1–21 (MIGLNHYLIVSGLLFCIGLAG), 28–48 (ILLLFFSTEIMLNAINIGFVA), and 64–84 (FIIAIAASEVAIGLGLVILWF).

This sequence belongs to the complex I subunit 4L family. In terms of assembly, NDH-1 is composed of 14 different subunits. Subunits NuoA, H, J, K, L, M, N constitute the membrane sector of the complex.

The protein resides in the cell inner membrane. It carries out the reaction a quinone + NADH + 5 H(+)(in) = a quinol + NAD(+) + 4 H(+)(out). NDH-1 shuttles electrons from NADH, via FMN and iron-sulfur (Fe-S) centers, to quinones in the respiratory chain. The immediate electron acceptor for the enzyme in this species is believed to be ubiquinone. Couples the redox reaction to proton translocation (for every two electrons transferred, four hydrogen ions are translocated across the cytoplasmic membrane), and thus conserves the redox energy in a proton gradient. The protein is NADH-quinone oxidoreductase subunit K of Helicobacter pylori (strain Shi470).